The following is a 111-amino-acid chain: Large ribosomal subunit protein uL22 (111 aa).

It belongs to the universal ribosomal protein uL22 family. As to quaternary structure, part of the 50S ribosomal subunit.

Functionally, this protein binds specifically to 23S rRNA; its binding is stimulated by other ribosomal proteins, e.g. L4, L17, and L20. It is important during the early stages of 50S assembly. It makes multiple contacts with different domains of the 23S rRNA in the assembled 50S subunit and ribosome. The globular domain of the protein is located near the polypeptide exit tunnel on the outside of the subunit, while an extended beta-hairpin is found that lines the wall of the exit tunnel in the center of the 70S ribosome. This chain is Large ribosomal subunit protein uL22, found in Chlamydia abortus (strain DSM 27085 / S26/3) (Chlamydophila abortus).